A 478-amino-acid chain; its full sequence is Glutamate-1-semialdehyde 2,1-aminomutase, chloroplastic (478 aa).

The N-terminal 40 residues, 1 to 40, are a transit peptide targeting the chloroplast; that stretch reads MAGAAAASAAAAAVASGISARPVAPRPSPSRARAPRSVVR. Residues 15 to 36 are disordered; sequence ASGISARPVAPRPSPSRARAPR. Lys-318 bears the N6-(pyridoxal phosphate)lysine mark.

Belongs to the class-III pyridoxal-phosphate-dependent aminotransferase family. HemL subfamily. As to quaternary structure, homodimer. The cofactor is pyridoxal 5'-phosphate.

Its subcellular location is the plastid. The protein resides in the chloroplast. It carries out the reaction (S)-4-amino-5-oxopentanoate = 5-aminolevulinate. It functions in the pathway porphyrin-containing compound metabolism; protoporphyrin-IX biosynthesis; 5-aminolevulinate from L-glutamyl-tRNA(Glu): step 2/2. It participates in porphyrin-containing compound metabolism; chlorophyll biosynthesis. The protein is Glutamate-1-semialdehyde 2,1-aminomutase, chloroplastic (GSA) of Oryza sativa subsp. japonica (Rice).